The following is a 347-amino-acid chain: Protein RecA (347 aa).

Gly67–Thr74 serves as a coordination point for ATP. A disordered region spans residues Ala327–Pro347. The segment covering Glu337 to Pro347 has biased composition (basic and acidic residues).

Belongs to the RecA family.

The protein localises to the cytoplasm. Can catalyze the hydrolysis of ATP in the presence of single-stranded DNA, the ATP-dependent uptake of single-stranded DNA by duplex DNA, and the ATP-dependent hybridization of homologous single-stranded DNAs. It interacts with LexA causing its activation and leading to its autocatalytic cleavage. The sequence is that of Protein RecA from Desulforapulum autotrophicum (strain ATCC 43914 / DSM 3382 / VKM B-1955 / HRM2) (Desulfobacterium autotrophicum).